Here is a 349-residue protein sequence, read N- to C-terminus: Twinfilin-2-B (349 aa).

2 consecutive ADF-H domains span residues 4 to 139 and 177 to 313; these read QTGI…KHVS and GLSF…DEVH. Residues 321–349 are disordered; that stretch reads QAFAKPKGPAGKRGQKRLIKGPGENGEDS.

The protein belongs to the actin-binding proteins ADF family. Twinfilin subfamily. In terms of assembly, interacts with G-actin; ADP-actin form and capping protein (CP).

Its subcellular location is the cytoplasm. The protein resides in the cytoskeleton. It is found in the perinuclear region. Functionally, actin-binding protein involved in motile and morphological processes. Inhibits actin polymerization, likely by sequestering G-actin. The protein is Twinfilin-2-B (twf2-b) of Xenopus laevis (African clawed frog).